A 77-amino-acid polypeptide reads, in one-letter code: MILFQSNTTTSYAYTNIQPKYAMQLEITILIVIGILILSVILYFIFCRQIPNVHRNSKRRPIYSPMISRPHMALNEI.

An N-linked (GlcNAc...) asparagine; by host glycan is attached at asparagine 7. A helical membrane pass occupies residues 27–47 (ITILIVIGILILSVILYFIFC).

It belongs to the adenoviridae E3A-1 family.

The protein resides in the host nucleus membrane. In Human adenovirus B serotype 3 (HAdV-3), this protein is Early E3 9.0 kDa glycoprotein.